Here is a 295-residue protein sequence, read N- to C-terminus: Polyprenyl transferase dpmaC (295 aa).

A run of 8 helical transmembrane segments spans residues Leu39–Ile59, Gln84–Leu104, Val109–Leu124, Lys131–Gly151, Tyr168–Ser188, Leu213–Phe233, Trp237–Phe257, and Ser271–Ala291.

This sequence belongs to the UbiA prenyltransferase family. Mg(2+) serves as cofactor.

The protein resides in the membrane. It participates in secondary metabolite biosynthesis; terpenoid biosynthesis. Polyprenyl transferase; part of the gene cluster that mediates the biosynthesis of the diterpenoid pyrones subglutinols A and B. The first step of the pathway is the synthesis of the alpha-pyrone moiety by the polyketide synthase dpmaA via condensation of one acetyl-CoA starter unit with 3 malonyl-CoA units and 2 methylations. The alpha-pyrone is then combined with geranylgeranyl pyrophosphate (GGPP) formed by the GGPP synthase dpmaD through the action of the prenyltransferase dpmaC to yield a linear alpha-pyrone diterpenoid. Subsequent steps in the diterpenoid pyrone biosynthetic pathway involve the decalin core formation, which is initiated by the epoxidation of the C10-C11 olefin by the FAD-dependent oxidoreductase dpmaE, and is followed by a cyclization cascade catalyzed by the terpene cyclase dpmaB. The dehydrogenase dpmaF is then involved in tetrahydrofuran (THF) ring formation at the C5 unit to complete the formation of subglutinols A and B. This Metarhizium anisopliae (Entomophthora anisopliae) protein is Polyprenyl transferase dpmaC.